The sequence spans 216 residues: 3-keto-L-gulonate-6-phosphate decarboxylase UlaD (216 aa).

A substrate-binding site is contributed by Asp-11. Mg(2+) contacts are provided by Glu-33 and Asp-62. Position 192 (Arg-192) interacts with substrate.

Belongs to the HPS/KGPDC family. KGPDC subfamily. Homodimer. It depends on Mg(2+) as a cofactor.

The enzyme catalyses 3-dehydro-L-gulonate 6-phosphate + H(+) = L-xylulose 5-phosphate + CO2. Its pathway is cofactor degradation; L-ascorbate degradation; D-xylulose 5-phosphate from L-ascorbate: step 2/4. Functionally, catalyzes the decarboxylation of 3-keto-L-gulonate-6-P into L-xylulose-5-P. Is involved in the anaerobic L-ascorbate utilization. This chain is 3-keto-L-gulonate-6-phosphate decarboxylase UlaD, found in Salmonella typhi.